The sequence spans 336 residues: ATP-dependent 6-phosphofructokinase (336 aa).

Residue glycine 11 participates in ATP binding. Residue 21–25 participates in ADP binding; sequence RAVVR. Residues 72-73 and 102-105 contribute to the ATP site; these read RY and GDGS. Aspartate 103 contacts Mg(2+). 125–127 is a binding site for substrate; the sequence is TID. Aspartate 127 serves as the catalytic Proton acceptor. Position 154 (arginine 154) interacts with ADP. Substrate-binding positions include arginine 162 and 169 to 171; that span reads MGR. Residues 185-187, lysine 211, and 213-215 each bind ADP; these read GAD and KKH. Substrate contacts are provided by residues glutamate 222, arginine 244, and 250–253; that span reads HIQR.

The protein belongs to the phosphofructokinase type A (PFKA) family. ATP-dependent PFK group I subfamily. Prokaryotic clade 'B1' sub-subfamily. As to quaternary structure, homotetramer. Mg(2+) serves as cofactor.

It localises to the cytoplasm. It carries out the reaction beta-D-fructose 6-phosphate + ATP = beta-D-fructose 1,6-bisphosphate + ADP + H(+). Its pathway is carbohydrate degradation; glycolysis; D-glyceraldehyde 3-phosphate and glycerone phosphate from D-glucose: step 3/4. With respect to regulation, allosterically activated by ADP and other diphosphonucleosides, and allosterically inhibited by phosphoenolpyruvate. In terms of biological role, catalyzes the phosphorylation of D-fructose 6-phosphate to fructose 1,6-bisphosphate by ATP, the first committing step of glycolysis. The sequence is that of ATP-dependent 6-phosphofructokinase from Streptococcus sanguinis (strain SK36).